The chain runs to 152 residues: Mediator of RNA polymerase II transcription subunit 9 (152 aa).

Residues 98 to 150 (IKRCKALLQENEEVRNLLANSIEEWENIIADKEQQLRVKAKVLRDLDARIEKI) are a coiled coil.

Belongs to the Mediator complex subunit 9 family. As to quaternary structure, component of the Mediator complex.

The protein resides in the nucleus. Its function is as follows. Component of the Mediator complex, a coactivator involved in the regulated transcription of nearly all RNA polymerase II-dependent genes. Mediator functions as a bridge to convey information from gene-specific regulatory proteins to the basal RNA polymerase II transcription machinery. Mediator is recruited to promoters by direct interactions with regulatory proteins and serves as a scaffold for the assembly of a functional preinitiation complex with RNA polymerase II and the general transcription factors. The sequence is that of Mediator of RNA polymerase II transcription subunit 9 (CSE2) from Candida glabrata (strain ATCC 2001 / BCRC 20586 / JCM 3761 / NBRC 0622 / NRRL Y-65 / CBS 138) (Yeast).